A 168-amino-acid polypeptide reads, in one-letter code: Peptide deformylase 2 (168 aa).

C91 and H133 together coordinate Fe cation. E134 is a catalytic residue. H137 is a binding site for Fe cation.

It belongs to the polypeptide deformylase family. Requires Fe(2+) as cofactor.

It catalyses the reaction N-terminal N-formyl-L-methionyl-[peptide] + H2O = N-terminal L-methionyl-[peptide] + formate. Its function is as follows. Removes the formyl group from the N-terminal Met of newly synthesized proteins. Requires at least a dipeptide for an efficient rate of reaction. N-terminal L-methionine is a prerequisite for activity but the enzyme has broad specificity at other positions. In Vibrio parahaemolyticus serotype O3:K6 (strain RIMD 2210633), this protein is Peptide deformylase 2.